A 675-amino-acid chain; its full sequence is MEPAMPEHDGDHASNPPHGVGIPNDSAGIVQTIEQARSEGHTHEIGGGEEGSGHERPAGMGALLAVLGVVYGDIGTSPLYALQSSVSIVSSPKAPAQPWEIMGLASLTFWALMLIVTIKYVILIMRADHDGEGGIIALMSLAQRVCKSQHFRWLFGLVGIAGTCLFFGDSIITPAISVLSAVEGIETSVPSASHIIIPLAMVVLVALFSVQVLGTGKIGKAFGPIMVCWFSVLAILGIKGIFLYPHILLALSPTFALEFIVLHGYLSFIALGSVVLSVTGAEALYADMGHFGRAPIRKAWLFFVLPSLTLNYFGQAALLIRDPHALSNPFYLLVPHWAQIPMLVLATFATVIASQAGISGSFSLCRQLIQLGYLPRTRIMHTNASEEAQIYLPSLNWILAFGALVLVLAFRTSSALAAAYGIAVTGTFLCTCVLAMVVFRRVFKWKSATVAIVFGFFFIVDSIFFSANVLKIPDGGWVPLAIGIISTIIMTTWKRGRSLIAARQQADSMPMGSFLARLPQSRTIRVPGLAVFLTANPDIVPNSLLHNLKHNKVLHDHILFVTVENLDQPEAERGHRAIVQELAPNIHRVIVRYGFMEMPNLPRALLELNALGVAFDAIQASYFTSHELVVRSRVPKMQLWRMWIFLFLLRNAASTTEFLRIPPDRVVEFGVRIAI.

The segment covering 1–12 has biased composition (basic and acidic residues); sequence MEPAMPEHDGDH. The interval 1–25 is disordered; it reads MEPAMPEHDGDHASNPPHGVGIPND. The next 12 helical transmembrane spans lie at 62-82, 104-124, 153-173, 195-215, 222-242, 255-275, 300-320, 332-352, 390-410, 419-439, 450-470, and 472-492; these read ALLAVLGVVYGDIGTSPLYAL, LASLTFWALMLIVTIKYVILI, WLFGLVGIAGTCLFFGDSIIT, IIIPLAMVVLVALFSVQVLGT, FGPIMVCWFSVLAILGIKGIF, FALEFIVLHGYLSFIALGSVV, WLFFVLPSLTLNYFGQAALLI, LLVPHWAQIPMLVLATFATVI, IYLPSLNWILAFGALVLVLAF, AYGIAVTGTFLCTCVLAMVVF, VAIVFGFFFIVDSIFFSANVL, and IPDGGWVPLAIGIISTIIMTT.

This sequence belongs to the HAK/KUP transporter (TC 2.A.72) family.

The protein localises to the cell inner membrane. The enzyme catalyses K(+)(in) + H(+)(in) = K(+)(out) + H(+)(out). Functionally, transport of potassium into the cell. Likely operates as a K(+):H(+) symporter. In Gluconobacter oxydans (strain 621H) (Gluconobacter suboxydans), this protein is Probable potassium transport system protein Kup.